Consider the following 335-residue polypeptide: Nucleoid-associated protein YejK (335 aa).

The protein belongs to the YejK family.

The protein resides in the cytoplasm. Its subcellular location is the nucleoid. In Shigella sonnei (strain Ss046), this protein is Nucleoid-associated protein YejK.